A 134-amino-acid polypeptide reads, in one-letter code: uncharacterized protein (134 aa).

The next 3 helical transmembrane spans lie at 5 to 25, 30 to 50, and 62 to 82; these read FGIF…FGGF, LILL…ETII, and LVKK…DQLL.

This sequence belongs to the bacteriophage holin family. Cp-1 holin subfamily.

Its subcellular location is the cell membrane. This is an uncharacterized protein from Bacillus subtilis (strain 168).